Here is a 197-residue protein sequence, read N- to C-terminus: MTNRDIVWHEASITKEEYQQKNKHKSSILWLTGLSGSGKSTIANAAARELFEQGYQVIVLDGDNIRHGLNKDLGFSDDDRKENIRRIGEVAKLFVQQGTIVITAFISPFREDRDQVRELVAEGEFNEIYVKCDLDICEKRDPKGLYKKARNGEIPFFTGIDSPYEEPKAPELVLDSGKCEREECTGRLVDFVKNSLA.

33–40 contacts ATP; that stretch reads GLSGSGKS. The Phosphoserine intermediate role is filled by S107.

This sequence belongs to the APS kinase family.

It catalyses the reaction adenosine 5'-phosphosulfate + ATP = 3'-phosphoadenylyl sulfate + ADP + H(+). It participates in sulfur metabolism; hydrogen sulfide biosynthesis; sulfite from sulfate: step 2/3. Functionally, catalyzes the synthesis of activated sulfate. This chain is Adenylyl-sulfate kinase, found in Bacillus velezensis (strain DSM 23117 / BGSC 10A6 / LMG 26770 / FZB42) (Bacillus amyloliquefaciens subsp. plantarum).